The primary structure comprises 129 residues: Glycine cleavage system H protein (129 aa).

A Lipoyl-binding domain is found at 24 to 106 (TYTVGITEHA…YAGGWIFKIK (83 aa)). Lys65 is subject to N6-lipoyllysine.

Belongs to the GcvH family. The glycine cleavage system is composed of four proteins: P, T, L and H. It depends on (R)-lipoate as a cofactor.

In terms of biological role, the glycine cleavage system catalyzes the degradation of glycine. The H protein shuttles the methylamine group of glycine from the P protein to the T protein. The polypeptide is Glycine cleavage system H protein (Citrobacter koseri (strain ATCC BAA-895 / CDC 4225-83 / SGSC4696)).